Reading from the N-terminus, the 570-residue chain is Periplasmic trehalase (570 aa).

The first 34 residues, 1–34, serve as a signal peptide directing secretion; sequence MIPPEIRRSVLLQKAIKLALAGTLLTFASFSATA. Substrate contacts are provided by residues Arg-159, 166–167, Asn-203, 212–214, 284–286, and Gly-317; these read WD, RSQ, and RPE. Catalysis depends on proton donor/acceptor residues Asp-319 and Glu-503. Residue Glu-518 coordinates substrate. The segment at 544 to 570 is disordered; it reads KPCDSVPSTRPASLSATPTKTPSAATQ. Residues 554 to 570 show a composition bias toward low complexity; sequence PASLSATPTKTPSAATQ.

It belongs to the glycosyl hydrolase 37 family. Monomer.

It is found in the periplasm. It carries out the reaction alpha,alpha-trehalose + H2O = alpha-D-glucose + beta-D-glucose. Its function is as follows. Provides the cells with the ability to utilize trehalose at high osmolarity by splitting it into glucose molecules that can subsequently be taken up by the phosphotransferase-mediated uptake system. The protein is Periplasmic trehalase of Salmonella schwarzengrund (strain CVM19633).